A 757-amino-acid polypeptide reads, in one-letter code: Probable tRNA (uracil-O(2)-)-methyltransferase (757 aa).

Disordered regions lie at residues 55 to 93 (EARG…GPEQ) and 108 to 138 (QQEE…GDFP). Residues 72–84 (PGPGQGSPGGGPG) show a composition bias toward gly residues. S78 is subject to Phosphoserine. Residues 123 to 136 (DSGHPGHAEGREGD) are compositionally biased toward basic and acidic residues. At S533 the chain carries Phosphoserine. A C3H1-type zinc finger spans residues 713-743 (ACKTRLCWFFMHHPDGCALSTDCCPFAHGPA).

Belongs to the TRM44 family.

It is found in the cytoplasm. The enzyme catalyses uridine(44) in tRNA(Ser) + S-adenosyl-L-methionine = 2'-O-methyluridine(44) in tRNA(Ser) + S-adenosyl-L-homocysteine + H(+). Functionally, probable adenosyl-L-methionine (AdoMet)-dependent tRNA (uracil-O(2)-)-methyltransferase. This is Probable tRNA (uracil-O(2)-)-methyltransferase (TRMT44) from Homo sapiens (Human).